Reading from the N-terminus, the 876-residue chain is MQRLSSASVRQMFIDFFKEKGHSVEPSASLVPFEDPSLLWINSGVATLKKYFDGRVIPENPRIVNAQKSIRTNDIENVGKTARHHTFFEMLGNFSIGDYFKEQAIEWAWEFLTDKKWIGFPQERLSVTVHPEDEEAYRYWHQHIGLPEERIIRLEGNFWDIGEGPSGPNSEIFYDRGPEYGDDPNDPELYPGGENERYLEIWNLVFSQFNHNADGTYTPLPKKNIDTGMGLERMVSVIQDTPTNFETDLFMPIIEATEALASTTYKEADTAFKVIADHIRTVAFAVGDGALPSNEGRGYVLRRLLRRAVRFAKSIGIDRPFMYELVPVVGAIMKDFYPEVADKQDFIARVIRTEEERFHETLNEGLAILSDIIEKAKATNKETIAGEDAFRLYDTYGFPIDLTEEYVHDEGLTVDRAGFDQEMEQQRQRARAARQESASMSVQEDVFGEVKTPSVFVGYEHTETDAVITTLVRGKEKVEQAVQGDVIQFFLDETPFYAESGGQVADRGMIVTDTGQAVVKDVKKAPNGQHLHTAEVTIGEISTGQQASARIEVRERLDIVKNHTATHLLHQALKDVLGEHVNQAGSLVSSERLRFDFSHFGQVTPNELQQIEEIVNEKVWQALPVDISIQRLEEAKAAGAMALFGEKYGSEVRVVRVGDYSLELCGGCHVRNTAEIGLFKITSESGIGAGVRRIEAVTSKGAYQFLSEQTAILKDAAERLKAKRLSDVPQRIESLQEELRKAQRENESLTAKLGQAEAGNLNDQVKEIGGVAVIAAQVDAKDTEALRSMVDTLKQAHEKAVIVLAAKTGNKLAFVAGVTKPAIAEGFHAGKLIKEVAARTGGGGGGRPDMAQAGGKDPAKLDEALAYVHEYVKSIS.

Residues histidine 563, histidine 567, cysteine 665, and histidine 669 each contribute to the Zn(2+) site.

Belongs to the class-II aminoacyl-tRNA synthetase family. Zn(2+) is required as a cofactor.

It localises to the cytoplasm. It carries out the reaction tRNA(Ala) + L-alanine + ATP = L-alanyl-tRNA(Ala) + AMP + diphosphate. Functionally, catalyzes the attachment of alanine to tRNA(Ala) in a two-step reaction: alanine is first activated by ATP to form Ala-AMP and then transferred to the acceptor end of tRNA(Ala). Also edits incorrectly charged Ser-tRNA(Ala) and Gly-tRNA(Ala) via its editing domain. In Shouchella clausii (strain KSM-K16) (Alkalihalobacillus clausii), this protein is Alanine--tRNA ligase.